A 687-amino-acid polypeptide reads, in one-letter code: DNA-directed RNA polymerase subunit beta' (687 aa).

Positions 76, 78, 94, and 97 each coordinate Zn(2+). Asp-496, Asp-498, and Asp-500 together coordinate Mg(2+).

The protein belongs to the RNA polymerase beta' chain family. RpoC1 subfamily. In plastids the minimal PEP RNA polymerase catalytic core is composed of four subunits: alpha, beta, beta', and beta''. When a (nuclear-encoded) sigma factor is associated with the core the holoenzyme is formed, which can initiate transcription. The cofactor is Mg(2+). Requires Zn(2+) as cofactor.

It localises to the plastid. Its subcellular location is the chloroplast. The enzyme catalyses RNA(n) + a ribonucleoside 5'-triphosphate = RNA(n+1) + diphosphate. Its function is as follows. DNA-dependent RNA polymerase catalyzes the transcription of DNA into RNA using the four ribonucleoside triphosphates as substrates. In Ipomoea purpurea (Common morning glory), this protein is DNA-directed RNA polymerase subunit beta'.